The sequence spans 334 residues: DCN1-like protein 3 (334 aa).

Residues 112 to 301 (VSHQTLSKLF…LFDDFVDYEK (190 aa)) form the DCUN1 domain. The tract at residues 308–334 (SGIHDDDNNNDDPLQSHVKAEDPGLVS) is disordered. Positions 325 to 334 (VKAEDPGLVS) are enriched in basic and acidic residues.

It localises to the cell membrane. In terms of biological role, promotes neddylation of cullin components of SCF-type E3 ubiquitin ligase complexes and thus regulates SCF-type complex activity. Function promotes cell proliferation. This chain is DCN1-like protein 3, found in Drosophila melanogaster (Fruit fly).